The sequence spans 573 residues: Sulfite reductase [NADPH] hemoprotein beta-component (573 aa).

The [4Fe-4S] cluster site is built by Cys438, Cys444, Cys483, and Cys487. Cys487 provides a ligand contact to siroheme.

It belongs to the nitrite and sulfite reductase 4Fe-4S domain family. Alpha(8)-beta(8). The alpha component is a flavoprotein, the beta component is a hemoprotein. Siroheme is required as a cofactor. Requires [4Fe-4S] cluster as cofactor.

It carries out the reaction hydrogen sulfide + 3 NADP(+) + 3 H2O = sulfite + 3 NADPH + 4 H(+). Its pathway is sulfur metabolism; hydrogen sulfide biosynthesis; hydrogen sulfide from sulfite (NADPH route): step 1/1. In terms of biological role, component of the sulfite reductase complex that catalyzes the 6-electron reduction of sulfite to sulfide. This is one of several activities required for the biosynthesis of L-cysteine from sulfate. The sequence is that of Sulfite reductase [NADPH] hemoprotein beta-component from Staphylococcus haemolyticus (strain JCSC1435).